Here is a 145-residue protein sequence, read N- to C-terminus: uncharacterized protein (145 aa).

Substrate-binding residues include V97 and N121.

The protein belongs to the D-isomer specific 2-hydroxyacid dehydrogenase family. FDH subfamily.

This is an uncharacterized protein from Saccharomyces cerevisiae (strain ATCC 204508 / S288c) (Baker's yeast).